Consider the following 510-residue polypeptide: 2,3-bisphosphoglycerate-independent phosphoglycerate mutase (510 aa).

Residues D13 and S63 each coordinate Mn(2+). S63 functions as the Phosphoserine intermediate in the catalytic mechanism. Substrate is bound by residues H124, 154-155 (RD), R186, R192, 262-265 (RADR), and K334. Mn(2+) is bound by residues D401, H405, D442, H443, and H461.

This sequence belongs to the BPG-independent phosphoglycerate mutase family. In terms of assembly, monomer. Mn(2+) serves as cofactor.

The catalysed reaction is (2R)-2-phosphoglycerate = (2R)-3-phosphoglycerate. It functions in the pathway carbohydrate degradation; glycolysis; pyruvate from D-glyceraldehyde 3-phosphate: step 3/5. In terms of biological role, catalyzes the interconversion of 2-phosphoglycerate and 3-phosphoglycerate. The chain is 2,3-bisphosphoglycerate-independent phosphoglycerate mutase from Aliivibrio fischeri (strain ATCC 700601 / ES114) (Vibrio fischeri).